Consider the following 470-residue polypeptide: MCENQLKTKADGTAQIEVIPCKICGDKSSGIHYGVITCEGCKGFFRRSQQNNASYSCPRQRNCLIDRTNRNRCQHCRLQKCLALGMSRDAVKFGRMSKKQRDSLYAEVQKHQQRLQEQRQQQSGEAEALARVYSSSISNGLSNLNTETGGTYANGHVIDLPKSEGYYNIDSGQPSPDQSGLDMTGIKQIKQEPIYDLTSVHNLFTYSSFNNGQLAPGITMSEIDRIAQNIIKSHLETCQYTMEELHQLAWQTHTYEEIKAYQSKSREALWQQCAIQITHAIQYVVEFAKRITGFMELCQNDQILLLKSGCLEVVLVRMCRAFNPLNNTVLFEGKYGGMQMFKALGSDDLVNEAFDFAKNLCSLQLTEEEIALFSSAVLISPDRAWLLEPRKVQKLQEKIYFALQHVIQKNHLDDETLAKLIAKIPTITAVCNLHGEKLQVFKQSHPDIVNTLFPPLYKELFNPDCAAVCK.

The nuclear receptor DNA-binding region spans 18-93 (VIPCKICGDK…LGMSRDAVKF (76 aa)). NR C4-type zinc fingers lie at residues 21-41 (CKIC…CEGC) and 57-81 (CPRQ…LQKC). A compositionally biased stretch (basic and acidic residues) spans 104–117 (LYAEVQKHQQRLQE). A disordered region spans residues 104-127 (LYAEVQKHQQRLQEQRQQQSGEAE). Residues 222–460 (EIDRIAQNII…TLFPPLYKEL (239 aa)) enclose the NR LBD domain. Residues 456–461 (LYKELF) carry the AF-2 motif.

It belongs to the nuclear hormone receptor family. NR1 subfamily. In terms of assembly, monomer. Interacts with CRX. In terms of tissue distribution, isoform 2 expressed with circadian rhythm in eye and pineal gland. Isoform 1 expressed in retina cortex, thalamus, and hypothalamus.

Its subcellular location is the nucleus. It localises to the nucleoplasm. Functionally, nuclear receptor that binds DNA as a monomer to ROR response elements (RORE) containing a single core motif half-site 5'-AGGTCA-3' preceded by a short A-T-rich sequence. Considered to have intrinsic transcriptional activity, have some natural ligands such as all-trans retinoic acid (ATRA) and other retinoids which act as inverse agonists repressing the transcriptional activity. Required for normal postnatal development of rod and cone photoreceptor cells. Modulates rod photoreceptors differentiation at least by inducing the transcription factor NRL-mediated pathway. In cone photoreceptor cells, regulates transcription of OPN1SW. Involved in the regulation of the period length and stability of the circadian rhythm. May control cytoarchitectural patterning of neocortical neurons during development. May act in a dose-dependent manner to regulate barrel formation upon innervation of layer IV neurons by thalamocortical axons. May play a role in the suppression of osteoblastic differentiation through the inhibition of RUNX2 transcriptional activity. In terms of biological role, critical for hindlimb motor control and for the differentiation of amacrine and horizontal cells in the retina. Regulates the expression of PTF1A synergistically with FOXN4. The chain is Nuclear receptor ROR-beta (Rorb) from Rattus norvegicus (Rat).